The chain runs to 1075 residues: Carbamoyl phosphate synthase large chain (1075 aa).

Residues 2–403 (PKRTDIKSIL…SLQKALRGLE (402 aa)) form a carboxyphosphate synthetic domain region. The ATP site is built by Arg-129, Arg-169, Gly-175, Gly-176, Glu-208, Leu-210, Glu-215, Gly-241, Ile-242, His-243, Gln-285, and Glu-299. One can recognise an ATP-grasp 1 domain in the interval 133 to 328 (DIAMKKIGLD…IAKVAAKLAV (196 aa)). Mg(2+) is bound by residues Gln-285, Glu-299, and Asn-301. Positions 285, 299, and 301 each coordinate Mn(2+). Residues 404-553 (VGATGFDPKV…YSTYEDECEA (150 aa)) are oligomerization domain. The segment at 554 to 936 (NPSIDRDKIM…AFAKAQLGSN (383 aa)) is carbamoyl phosphate synthetic domain. In terms of domain architecture, ATP-grasp 2 spans 679-870 (QHAVDRLKLK…LAKVAARVMA (192 aa)). 10 residues coordinate ATP: Arg-715, Arg-754, Leu-756, Glu-761, Gly-786, Val-787, His-788, Ser-789, Gln-829, and Glu-841. Gln-829, Glu-841, and Asn-843 together coordinate Mg(2+). The Mn(2+) site is built by Gln-829, Glu-841, and Asn-843. Residues 937-1075 (STMKKQGRAL…QEMHAQIKKS (139 aa)) enclose the MGS-like domain. An allosteric domain region spans residues 937–1075 (STMKKQGRAL…QEMHAQIKKS (139 aa)).

The protein belongs to the CarB family. Composed of two chains; the small (or glutamine) chain promotes the hydrolysis of glutamine to ammonia, which is used by the large (or ammonia) chain to synthesize carbamoyl phosphate. Tetramer of heterodimers (alpha,beta)4. Requires Mg(2+) as cofactor. The cofactor is Mn(2+).

The enzyme catalyses hydrogencarbonate + L-glutamine + 2 ATP + H2O = carbamoyl phosphate + L-glutamate + 2 ADP + phosphate + 2 H(+). It carries out the reaction hydrogencarbonate + NH4(+) + 2 ATP = carbamoyl phosphate + 2 ADP + phosphate + 2 H(+). The protein operates within amino-acid biosynthesis; L-arginine biosynthesis; carbamoyl phosphate from bicarbonate: step 1/1. It functions in the pathway pyrimidine metabolism; UMP biosynthesis via de novo pathway; (S)-dihydroorotate from bicarbonate: step 1/3. In terms of biological role, large subunit of the glutamine-dependent carbamoyl phosphate synthetase (CPSase). CPSase catalyzes the formation of carbamoyl phosphate from the ammonia moiety of glutamine, carbonate, and phosphate donated by ATP, constituting the first step of 2 biosynthetic pathways, one leading to arginine and/or urea and the other to pyrimidine nucleotides. The large subunit (synthetase) binds the substrates ammonia (free or transferred from glutamine from the small subunit), hydrogencarbonate and ATP and carries out an ATP-coupled ligase reaction, activating hydrogencarbonate by forming carboxy phosphate which reacts with ammonia to form carbamoyl phosphate. The protein is Carbamoyl phosphate synthase large chain of Salmonella typhimurium (strain LT2 / SGSC1412 / ATCC 700720).